The chain runs to 159 residues: Aspartate carbamoyltransferase regulatory chain (159 aa).

Residues cysteine 113, cysteine 118, cysteine 142, and cysteine 145 each coordinate Zn(2+).

It belongs to the PyrI family. Contains catalytic and regulatory chains. Zn(2+) is required as a cofactor.

Its function is as follows. Involved in allosteric regulation of aspartate carbamoyltransferase. The protein is Aspartate carbamoyltransferase regulatory chain of Saccharolobus islandicus (strain Y.N.15.51 / Yellowstone #2) (Sulfolobus islandicus).